The chain runs to 498 residues: ATP synthase subunit beta, chloroplastic (498 aa).

Residue 172-179 (GGAGVGKT) coordinates ATP.

The protein belongs to the ATPase alpha/beta chains family. As to quaternary structure, F-type ATPases have 2 components, CF(1) - the catalytic core - and CF(0) - the membrane proton channel. CF(1) has five subunits: alpha(3), beta(3), gamma(1), delta(1), epsilon(1). CF(0) has four main subunits: a(1), b(1), b'(1) and c(9-12).

The protein resides in the plastid. It localises to the chloroplast thylakoid membrane. It catalyses the reaction ATP + H2O + 4 H(+)(in) = ADP + phosphate + 5 H(+)(out). Functionally, produces ATP from ADP in the presence of a proton gradient across the membrane. The catalytic sites are hosted primarily by the beta subunits. The protein is ATP synthase subunit beta, chloroplastic of Solanum bulbocastanum (Wild potato).